We begin with the raw amino-acid sequence, 561 residues long: Putative transport protein YbjL (561 aa).

5 helical membrane passes run 8–28 (LLNG…LCLG), 32–52 (LGSI…LLGQ), 66–86 (FMLF…SIFF), 94–114 (MLAL…GKLF), and 158–178 (NLSL…IVGA). 2 RCK C-terminal domains span residues 200 to 288 (RGLD…SFRN) and 292 to 373 (VFDR…RIGF). The next 5 membrane-spanning stretches (helical) occupy residues 383 to 403 (LLAF…TFQF), 406 to 426 (FSFG…LGFM), 451 to 471 (VFMA…LGAI), 475 to 495 (MLIA…LFGA), and 540 to 560 (AIAN…WPGL).

Belongs to the AAE transporter (TC 2.A.81) family. YbjL subfamily.

It localises to the cell membrane. This chain is Putative transport protein YbjL, found in Escherichia coli O139:H28 (strain E24377A / ETEC).